A 125-amino-acid polypeptide reads, in one-letter code: Small ribosomal subunit protein uS13 (125 aa).

The tract at residues 95 to 125 (GLPVRGQRTKNNCRTRKGKRKTVANKKKATK) is disordered.

The protein belongs to the universal ribosomal protein uS13 family. Part of the 30S ribosomal subunit. Forms a loose heterodimer with protein S19. Forms two bridges to the 50S subunit in the 70S ribosome.

In terms of biological role, located at the top of the head of the 30S subunit, it contacts several helices of the 16S rRNA. In the 70S ribosome it contacts the 23S rRNA (bridge B1a) and protein L5 of the 50S subunit (bridge B1b), connecting the 2 subunits; these bridges are implicated in subunit movement. Contacts the tRNAs in the A and P-sites. The polypeptide is Small ribosomal subunit protein uS13 (Cytophaga hutchinsonii (strain ATCC 33406 / DSM 1761 / CIP 103989 / NBRC 15051 / NCIMB 9469 / D465)).